Here is a 212-residue protein sequence, read N- to C-terminus: Thymidylate kinase (212 aa).

10-17 is an ATP binding site; sequence GPEGAGKT.

This sequence belongs to the thymidylate kinase family.

It catalyses the reaction dTMP + ATP = dTDP + ADP. In terms of biological role, phosphorylation of dTMP to form dTDP in both de novo and salvage pathways of dTTP synthesis. The sequence is that of Thymidylate kinase from Bacillus pumilus (strain SAFR-032).